We begin with the raw amino-acid sequence, 100 residues long: Co-chaperonin GroES (100 aa).

This sequence belongs to the GroES chaperonin family. As to quaternary structure, heptamer of 7 subunits arranged in a ring. Interacts with the chaperonin GroEL.

The protein localises to the cytoplasm. In terms of biological role, together with the chaperonin GroEL, plays an essential role in assisting protein folding. The GroEL-GroES system forms a nano-cage that allows encapsulation of the non-native substrate proteins and provides a physical environment optimized to promote and accelerate protein folding. GroES binds to the apical surface of the GroEL ring, thereby capping the opening of the GroEL channel. The polypeptide is Co-chaperonin GroES (Nocardia farcinica (strain IFM 10152)).